Consider the following 363-residue polypeptide: NAD(P)H-quinone oxidoreductase subunit 1, chloroplastic (363 aa).

The next 6 membrane-spanning stretches (helical) occupy residues 28–48 (WVFV…LAIV), 98–118 (FSFG…VIPF), 129–149 (IGVF…LMSG), 253–273 (FGLF…FVTV), 300–320 (VFVT…FIFV), and 336–356 (LLNL…LLTT).

Belongs to the complex I subunit 1 family. As to quaternary structure, NDH is composed of at least 16 different subunits, 5 of which are encoded in the nucleus.

The protein resides in the plastid. The protein localises to the chloroplast thylakoid membrane. The enzyme catalyses a plastoquinone + NADH + (n+1) H(+)(in) = a plastoquinol + NAD(+) + n H(+)(out). It catalyses the reaction a plastoquinone + NADPH + (n+1) H(+)(in) = a plastoquinol + NADP(+) + n H(+)(out). In terms of biological role, NDH shuttles electrons from NAD(P)H:plastoquinone, via FMN and iron-sulfur (Fe-S) centers, to quinones in the photosynthetic chain and possibly in a chloroplast respiratory chain. The immediate electron acceptor for the enzyme in this species is believed to be plastoquinone. Couples the redox reaction to proton translocation, and thus conserves the redox energy in a proton gradient. In Phaseolus vulgaris (Kidney bean), this protein is NAD(P)H-quinone oxidoreductase subunit 1, chloroplastic.